A 216-amino-acid polypeptide reads, in one-letter code: Ras-related protein Rab-5C (216 aa).

Residues Ser-30, Ala-31, Gly-33, Lys-34, Ser-35, Ser-36, His-47, Glu-48, Thr-53, and Gly-79 each coordinate GTP. Ser-35 is a binding site for Mg(2+). 2 consecutive short sequence motifs (switch) follow at residues 45–57 (QFHE…IGAA) and 78–94 (AGQE…YRGA). Thr-53 contacts Mg(2+). Ser-85 is subject to Phosphoserine. Residues Asn-134, Lys-135, Asp-137, Ala-165, and Lys-166 each coordinate GTP. The disordered stretch occupies residues 185–216 (NEPQNAAGAPSRNRGVDLQENSPASRSQCCSN). Residues 203–216 (QENSPASRSQCCSN) show a composition bias toward polar residues. 2 S-geranylgeranyl cysteine lipidation sites follow: Cys-213 and Cys-214.

It belongs to the small GTPase superfamily. Rab family. Interacts with EEA1 and INCA1. Interacts with GDI1, GDI2, CHML and CHM; phosphorylation at Ser-85 disrupts this interaction. The cofactor is Mg(2+). Phosphorylation of Ser-85 in the switch II region by LRRK2 prevents the association of RAB regulatory proteins, including CHM, CHML and RAB GDP dissociation inhibitors GDI1 and GDI2.

The protein resides in the cell membrane. The protein localises to the early endosome membrane. Its subcellular location is the melanosome. The catalysed reaction is GTP + H2O = GDP + phosphate + H(+). Regulated by guanine nucleotide exchange factors (GEFs) which promote the exchange of bound GDP for free GTP. Regulated by GTPase activating proteins (GAPs) which increase the GTP hydrolysis activity. Inhibited by GDP dissociation inhibitors (GDIs). Its function is as follows. The small GTPases Rab are key regulators of intracellular membrane trafficking, from the formation of transport vesicles to their fusion with membranes. Rabs cycle between an inactive GDP-bound form and an active GTP-bound form that is able to recruit to membranes different sets of downstream effectors directly responsible for vesicle formation, movement, tethering and fusion. This chain is Ras-related protein Rab-5C (RAB5C), found in Canis lupus familiaris (Dog).